Reading from the N-terminus, the 214-residue chain is Osteoclast-stimulating factor 1 (214 aa).

Ser-2 carries the post-translational modification N-acetylserine. One can recognise an SH3 domain in the interval 12-71; sequence GQVKVFRALYTFEPRTPDELYFEEGDIIYITDMSDTNWWKGTSKGRTGLIPSNYVAEQAE. 3 ANK repeats span residues 72–101, 105–135, and 139–168; these read SIDNPLHEAAKRGNLSWLRECLDNRVGVNG, AGSTALYWACHGGHKDIVDMLFTQPNIELNQ, and LGDTALHAAAWKGYADIVQLLLAKGARTDL. Thr-200 bears the Phosphothreonine mark. Residues Ser-202 and Ser-213 each carry the phosphoserine modification.

As to quaternary structure, interacts with SRC and SMN1. Interacts with FASLG.

It localises to the cytoplasm. In terms of biological role, induces bone resorption, acting probably through a signaling cascade which results in the secretion of factor(s) enhancing osteoclast formation and activity. This chain is Osteoclast-stimulating factor 1 (OSTF1), found in Sus scrofa (Pig).